We begin with the raw amino-acid sequence, 370 residues long: Dihydroorotate dehydrogenase (quinone) (370 aa).

Residues 80–84 (AGFDK) and Thr-104 each bind FMN. Substrate is bound at residue Lys-84. Residue 129–133 (NRMGF) participates in substrate binding. Asn-157 and Asn-190 together coordinate FMN. Residue Asn-190 participates in substrate binding. The active-site Nucleophile is Ser-193. Asn-195 is a substrate binding site. Residues Lys-226 and Thr-254 each coordinate FMN. 255-256 (NT) contributes to the substrate binding site. Residues Gly-278, Gly-307, and 328–329 (YT) contribute to the FMN site.

Belongs to the dihydroorotate dehydrogenase family. Type 2 subfamily. In terms of assembly, monomer. FMN is required as a cofactor.

Its subcellular location is the cell membrane. The catalysed reaction is (S)-dihydroorotate + a quinone = orotate + a quinol. Its pathway is pyrimidine metabolism; UMP biosynthesis via de novo pathway; orotate from (S)-dihydroorotate (quinone route): step 1/1. Functionally, catalyzes the conversion of dihydroorotate to orotate with quinone as electron acceptor. In Mycolicibacterium paratuberculosis (strain ATCC BAA-968 / K-10) (Mycobacterium paratuberculosis), this protein is Dihydroorotate dehydrogenase (quinone).